The following is a 106-amino-acid chain: RxLR effector protein PSR1 (106 aa).

A signal peptide spans 1–20 (MRLTYVLLVAVTTLLVSCDA). A RxLR-dEER motif is present at residues 33–46 (RLLRFVEAADEEER). Positions 50–106 (FSPEKLRKMLGDETYRLKKFGKWDSDGHTFDGLKHYLLLSDSSMVKLRNMYKAWLEQ) are WY domain. The Bipartite nuclear localization signal (NLS) motif lies at 56-69 (RKMLGDETYRLKKF).

Belongs to the RxLR effector family. As to quaternary structure, interacts with host PINP1.

The protein resides in the secreted. Its subcellular location is the host nucleus. Its function is as follows. Secreted effector that possesses RNA silencing suppression activity by inhibiting the biogenesis of small RNAs in the host plant to promote enhanced susceptibility of host to the pathogen during infection. Interferes with secondary siRNA production by associating with host nuclear protein PINP1 that acts as a regulator of the accumulation of both microRNAs and endogenous small interfering RNAs. The protein is RxLR effector protein PSR1 of Phytophthora sojae (Soybean stem and root rot agent).